The primary structure comprises 4151 residues: Mycoketide-CoA synthase (4151 aa).

Residues 2-32 (VDQLQHATEALRKALVQVERLKRTNRALLER) are a coiled coil. In terms of domain architecture, Ketosynthase family 3 (KS3) 1 spans 34–457 (SEPIAIVGMS…GTNAHVIIEA (424 aa)). Module regions lie at residues 35 to 2038 (EPIA…RTEL) and 2057 to 4070 (DPIA…RREL). Cys203 (acyl-thioester intermediate; for beta-ketoacyl synthase 1 activity) is an active-site residue. Active-site for beta-ketoacyl synthase 1 activity residues include His338 and His379. Residues 559–880 (VFVFPGQGSQ…AASAFVAGVA (322 aa)) are acyltransferase 1. The Acyl-ester intermediate; for acyltransferase 1 activity role is filled by Ser650. The segment at 926–1048 (HPLLGAVVDL…GILRPGSVEP (123 aa)) is N-terminal hotdog fold 1. The segment at 926–1194 (HPLLGAVVDL…VARPVTERQL (269 aa)) is dehydratase 1. Residues 926–1195 (HPLLGAVVDL…ARPVTERQLL (270 aa)) form the PKS/mFAS DH 1 domain. His958 (proton acceptor; for dehydratase activity 1) is an active-site residue. The segment at 1060–1195 (AVTVDVADGY…ARPVTERQLL (136 aa)) is C-terminal hotdog fold 1. Asp1120 acts as the Proton donor; for dehydratase activity 1 in catalysis. An enoyl reductase 1 region spans residues 1366–1671 (GTFENLRLEP…QARHTGKVVM (306 aa)). The tract at residues 1680-1858 (GTVLITGGTG…AISLGWGLWD (179 aa)) is beta-ketoacyl reductase 1. Residue Tyr1828 is the For beta-ketoacyl reductase 1 activity of the active site. A Carrier 1 domain is found at 1963–2038 (AVLLGLVRLH…RLASYIRTEL (76 aa)). Position 1998 is an O-(pantetheine 4'-phosphoryl)serine (Ser1998). The Ketosynthase family 3 (KS3) 2 domain maps to 2056-2480 (EDPIAIVGMA…GTNAHVIIEA (425 aa)). The Acyl-thioester intermediate; for beta-ketoacyl synthase 2 activity role is filled by Cys2226. Catalysis depends on for beta-ketoacyl synthase 2 activity residues His2361 and His2402. The interval 2582-2893 (VFVFPGQGSQ…AVAQGFVTGM (312 aa)) is acyltransferase 2. Residue Ser2672 is the Acyl-ester intermediate; for acyltransferase 2 activity of the active site. Residues 2940-3062 (HALLGAVIDL…GALRAGSAEP (123 aa)) form an N-terminal hotdog fold 2 region. Residues 2940–3215 (HALLGAVIDL…ARPVTDQQLR (276 aa)) form a dehydratase 2 region. A PKS/mFAS DH 2 domain is found at 2940–3215 (HALLGAVIDL…ARPVTDQQLR (276 aa)). His2972 (proton acceptor; for dehydratase activity 2) is an active-site residue. Residues 3074 to 3215 (AVPVEVADGY…ARPVTDQQLR (142 aa)) are C-terminal hotdog fold 2. The Proton donor; for dehydratase activity 2 role is filled by Asp3135. Residues 3395–3701 (GTFENLRLEL…QARHTGKVVM (307 aa)) are enoyl reductase 2. The segment at 3710 to 3888 (GTVLITGGTG…AISLGWGLWD (179 aa)) is beta-ketoacyl reductase 2. Tyr3858 acts as the For beta-ketoacyl reductase 2 activity in catalysis. Residues 3995-4070 (AVLLDLVRSH…ALAGYMRREL (76 aa)) enclose the Carrier 2 domain. O-(pantetheine 4'-phosphoryl)serine is present on Ser4030.

In terms of assembly, forms a large supramolecular assembly mediated through specific interactions between the N- and C-terminus linkers.

The enzyme catalyses a medium-chain fatty acyl-CoA + 5 (S)-methylmalonyl-CoA + 5 malonyl-CoA + 22 NADPH + 32 H(+) = a mycoketide-CoA + 10 CO2 + 22 NADP(+) + 10 CoA + 11 H2O. The protein operates within lipid metabolism; fatty acid metabolism. Functionally, involved in the synthesis of beta-D-mannosyl phosphomycoketide (MPM), an antigenic mycobacterial polyketide. Binds a fatty acyl-CoA as a starter unit, and extends it by five rounds of alternative additions of malonyl-CoA and methylmalonyl-CoA extender units. Depending on the starter unit, the enzyme forms mycoketide-CoAs of different lengths. Shows preference for small-/medium-chain starter fatty acyl substrates. Uses a hybrid modularly iterative mechanism, by forming a supramolecular assembly to perform repetitive cycles of iterations. The sequence is that of Mycoketide-CoA synthase from Mycobacterium tuberculosis (strain ATCC 25618 / H37Rv).